The primary structure comprises 159 residues: Ribosomal RNA large subunit methyltransferase H (159 aa).

S-adenosyl-L-methionine contacts are provided by residues leucine 76, glycine 108, and 127 to 132; that span reads FSKMTF.

The protein belongs to the RNA methyltransferase RlmH family. Homodimer.

Its subcellular location is the cytoplasm. The catalysed reaction is pseudouridine(1915) in 23S rRNA + S-adenosyl-L-methionine = N(3)-methylpseudouridine(1915) in 23S rRNA + S-adenosyl-L-homocysteine + H(+). In terms of biological role, specifically methylates the pseudouridine at position 1915 (m3Psi1915) in 23S rRNA. This chain is Ribosomal RNA large subunit methyltransferase H, found in Bifidobacterium longum (strain DJO10A).